The sequence spans 565 residues: Proline--tRNA ligase (565 aa).

It belongs to the class-II aminoacyl-tRNA synthetase family. ProS type 1 subfamily. In terms of assembly, homodimer.

It is found in the cytoplasm. It catalyses the reaction tRNA(Pro) + L-proline + ATP = L-prolyl-tRNA(Pro) + AMP + diphosphate. In terms of biological role, catalyzes the attachment of proline to tRNA(Pro) in a two-step reaction: proline is first activated by ATP to form Pro-AMP and then transferred to the acceptor end of tRNA(Pro). As ProRS can inadvertently accommodate and process non-cognate amino acids such as alanine and cysteine, to avoid such errors it has two additional distinct editing activities against alanine. One activity is designated as 'pretransfer' editing and involves the tRNA(Pro)-independent hydrolysis of activated Ala-AMP. The other activity is designated 'posttransfer' editing and involves deacylation of mischarged Ala-tRNA(Pro). The misacylated Cys-tRNA(Pro) is not edited by ProRS. This Bacillus pumilus (strain SAFR-032) protein is Proline--tRNA ligase.